Here is a 209-residue protein sequence, read N- to C-terminus: Pyridoxine/pyridoxamine 5'-phosphate oxidase (209 aa).

Residues 2-5 and Lys66 each bind substrate; that span reads RVEY. Residues 61–66, 76–77, Lys83, and Gln105 contribute to the FMN site; these read RTVLCK and FT. 3 residues coordinate substrate: Tyr123, Arg127, and Ser131. Residues 140 to 141 and Trp186 contribute to the FMN site; that span reads QS. 192–194 is a substrate binding site; the sequence is RVH. Position 196 (Arg196) interacts with FMN.

It belongs to the pyridoxamine 5'-phosphate oxidase family. In terms of assembly, homodimer. Requires FMN as cofactor.

It catalyses the reaction pyridoxamine 5'-phosphate + O2 + H2O = pyridoxal 5'-phosphate + H2O2 + NH4(+). The enzyme catalyses pyridoxine 5'-phosphate + O2 = pyridoxal 5'-phosphate + H2O2. Its pathway is cofactor metabolism; pyridoxal 5'-phosphate salvage; pyridoxal 5'-phosphate from pyridoxamine 5'-phosphate: step 1/1. It functions in the pathway cofactor metabolism; pyridoxal 5'-phosphate salvage; pyridoxal 5'-phosphate from pyridoxine 5'-phosphate: step 1/1. In terms of biological role, catalyzes the oxidation of either pyridoxine 5'-phosphate (PNP) or pyridoxamine 5'-phosphate (PMP) into pyridoxal 5'-phosphate (PLP). The polypeptide is Pyridoxine/pyridoxamine 5'-phosphate oxidase (Mycobacterium sp. (strain JLS)).